Here is a 110-residue protein sequence, read N- to C-terminus: uncharacterized protein (110 aa).

Residues 1 to 26 form the signal peptide; it reads MIRNVLLAFMICSGMTLLGGCSSVMS. Residues 87-110 are disordered; the sequence is RVEKSEANAQATNAVIPPARMPDN.

To E.coli YceK.

This is an uncharacterized protein from Escherichia coli (strain K12).